Here is a 218-residue protein sequence, read N- to C-terminus: LHFPL tetraspan subfamily member 3 protein (218 aa).

Transmembrane regions (helical) follow at residues 22–42 (IGVL…VCFI), 96–116 (FFIG…GLFF), 126–146 (ICAW…MIFP), and 177–197 (ILAI…FVLG).

The protein belongs to the LHFP family.

It is found in the membrane. The polypeptide is LHFPL tetraspan subfamily member 3 protein (Xenopus laevis (African clawed frog)).